The chain runs to 367 residues: Phosphoribosylaminoimidazole-succinocarboxamide synthase (367 aa).

The protein belongs to the SAICAR synthetase family.

It catalyses the reaction 5-amino-1-(5-phospho-D-ribosyl)imidazole-4-carboxylate + L-aspartate + ATP = (2S)-2-[5-amino-1-(5-phospho-beta-D-ribosyl)imidazole-4-carboxamido]succinate + ADP + phosphate + 2 H(+). The protein operates within purine metabolism; IMP biosynthesis via de novo pathway; 5-amino-1-(5-phospho-D-ribosyl)imidazole-4-carboxamide from 5-amino-1-(5-phospho-D-ribosyl)imidazole-4-carboxylate: step 1/2. This Shewanella halifaxensis (strain HAW-EB4) protein is Phosphoribosylaminoimidazole-succinocarboxamide synthase.